The following is a 435-amino-acid chain: GPI-anchor transamidase component PIGU (435 aa).

Residues methionine 1–alanine 3 are Cytoplasmic-facing. Residues proline 4–serine 22 form a helical membrane-spanning segment. At serine 23 to aspartate 78 the chain is on the lumenal side. The helical transmembrane segment at tyrosine 79 to isoleucine 99 threads the bilayer. The Cytoplasmic segment spans residues glutamine 100–isoleucine 136. The next 4 membrane-spanning stretches (helical) occupy residues proline 137 to serine 158, threonine 159 to serine 178, valine 179 to leucine 194, and tyrosine 195 to leucine 205. Topologically, residues tyrosine 206–phenylalanine 222 are cytoplasmic. Lysine 216 provides a ligand contact to a cardiolipin. A helical transmembrane segment spans residues tryptophan 223–serine 244. Residues phenylalanine 245–serine 286 lie on the Lumenal side of the membrane. A helical membrane pass occupies residues leucine 287–isoleucine 306. The Cytoplasmic portion of the chain corresponds to lysine 307–histidine 311. Lysine 309 provides a ligand contact to a cardiolipin. Transmembrane regions (helical) follow at residues proline 312–threonine 331 and valine 332–tryptophan 345. The Cytoplasmic segment spans residues asparagine 346 to asparagine 354. The helical transmembrane segment at valine 355–leucine 372 threads the bilayer. The Lumenal segment spans residues tryptophan 373–serine 384. Residues asparagine 383 and asparagine 385 each coordinate a 2-acyl-6-[6-phosphoethanolamine-alpha-D-mannosyl-(1-&gt;2)-6-phosphoethanolamine-alpha-D-mannosyl-(1-&gt;6)-2-phosphoethanolamine-alpha-D-mannosyl-(1-&gt;4)-alpha-D-glucosaminyl]-1-(1-radyl,2-acyl-sn-glycero-3-phospho)-1D-myo-inositol. The chain crosses the membrane as a helical span at residues asparagine 385–phenylalanine 406. Topologically, residues tyrosine 407–lysine 435 are cytoplasmic.

This sequence belongs to the PIGU family. As to quaternary structure, heteropentamer. Part of the GPI-anchor transamidase complex, consisting of PIGK, PIGT, PIGS, PIGU and GAA1.

The protein resides in the endoplasmic reticulum membrane. The protein operates within glycolipid biosynthesis; glycosylphosphatidylinositol-anchor biosynthesis. Component of the glycosylphosphatidylinositol-anchor (GPI-anchor) transamidase (GPI-T) complex that catalyzes the formation of the linkage between a proprotein and a GPI-anchor and participates in GPI anchored protein biosynthesis. Binds the lipid portion of GPI-anchor. May act as an organizer in the transmembrane layer to recruit other subunits, and thus is essential for assembly of the complex. In Cricetulus griseus (Chinese hamster), this protein is GPI-anchor transamidase component PIGU.